The chain runs to 312 residues: Protoheme IX farnesyltransferase (312 aa).

A run of 8 helical transmembrane segments spans residues 34-54 (LVIF…HPVL), 56-76 (FTAI…NMAL), 119-139 (ALVN…YVVI), 152-172 (IVIG…AATG), 179-199 (LLLF…LALF), 225-245 (ILLY…LGYF), 247-267 (WVYG…AINV), and 283-303 (LFAF…LDVL).

This sequence belongs to the UbiA prenyltransferase family. Protoheme IX farnesyltransferase subfamily.

The protein resides in the cell inner membrane. The catalysed reaction is heme b + (2E,6E)-farnesyl diphosphate + H2O = Fe(II)-heme o + diphosphate. Its pathway is porphyrin-containing compound metabolism; heme O biosynthesis; heme O from protoheme: step 1/1. In terms of biological role, converts heme B (protoheme IX) to heme O by substitution of the vinyl group on carbon 2 of heme B porphyrin ring with a hydroxyethyl farnesyl side group. This Nitrobacter hamburgensis (strain DSM 10229 / NCIMB 13809 / X14) protein is Protoheme IX farnesyltransferase.